Reading from the N-terminus, the 458-residue chain is Jacalin-related lectin 22 (458 aa).

Jacalin-type lectin domains lie at 5-153, 160-301, and 311-453; these read YRKL…YFVL, LYKL…YFGP, and SKKL…TIVP.

Belongs to the jacalin lectin family. Component of the PYK10 complex, at least composed of PYK10/BGLU23, BGLU21, BGLU22, JAL22, JAL23, PBP1/JAL30, PBP2/JAL31, JAL32, JAL33, JAL34, JAL35, GLL22 and GLL23.

Its function is as follows. Inhibitor-type lectin that may regulate the correct polymerization and activation of BGLU23/PYK10 upon tissue damage. The protein is Jacalin-related lectin 22 (JAL22) of Arabidopsis thaliana (Mouse-ear cress).